The chain runs to 360 residues: Zinc metalloproteinase nas-5 (360 aa).

A signal peptide spans 1–21 (MDIKQLLLSIILTVSVVNGRG). In terms of domain architecture, Peptidase M12A spans 61-269 (NALLSNSPLR…KKVCAIYHCS (209 aa)). Residue Asn-108 is glycosylated (N-linked (GlcNAc...) asparagine). Disulfide bonds link Cys-111-Cys-268 and Cys-134-Cys-157. His-165 provides a ligand contact to Zn(2+). Glu-166 is a catalytic residue. His-169 and His-175 together coordinate Zn(2+). Positions 299 to 336 (QGDSCTDRLGICPMLKSREMLNCKVMATFCCSSCSAPT) constitute a PLAC domain.

Requires Zn(2+) as cofactor.

The protein resides in the secreted. In terms of biological role, metalloprotease. This is Zinc metalloproteinase nas-5 (nas-5) from Caenorhabditis elegans.